A 1538-amino-acid chain; its full sequence is Lhr helicase/uracil glycosylase (1538 aa).

The lhr-Core stretch occupies residues 1 to 897 (MADNPDPSSL…ERRASVLSLD (897 aa)). ATP contacts are provided by Gln-34, Lys-57, Thr-58, Asp-179, Glu-180, Ile-398, Arg-415, and His-418. The 198-residue stretch at 38–235 (WHVAARSEHA…FLGGDRPVTV (198 aa)) folds into the Helicase ATP-binding domain. The DEVH box motif lies at 179–182 (DEVH). The 179-residue stretch at 284–462 (GILDEVLRHR…NLTPPHNPLD (179 aa)) folds into the Helicase C-terminal domain. A beta-sheet bundle region spans residues 463 to 552 (VLAQQTVAAA…VTSGGTIPDR (90 aa)). Residues 553 to 623 (GMYSVLLPEG…SARLPFWRGE (71 aa)) form a WH domain region. Residues 624-897 (GNGRPAELGE…ERRASVLSLD (274 aa)) form a domain 4 region. Positions 898-1538 (SELLRNLLGQ…SSSPQGLDWG (641 aa)) are lhr-CTD. Residues 1287-1312 (SNARTSTRRSHRARRGRPVYAQPVSP) are disordered. Positions 1292-1303 (STRRSHRARRGR) are enriched in basic residues.

Belongs to the Lhr helicase family. Homooligomerizes, probably a homotetramer. The cofactor is Ca(2+). Requires Uracil deglycosylase activity does not require a cofactor. as cofactor.

It catalyses the reaction Couples ATP hydrolysis with the unwinding of duplex DNA by translocating in the 3'-5' direction.. The enzyme catalyses ATP + H2O = ADP + phosphate + H(+). It carries out the reaction Hydrolyzes single-stranded DNA or mismatched double-stranded DNA and polynucleotides, releasing free uracil.. Its function is as follows. A 3'-5' helicase probably involved in DNA repair. Translocates in an ATP-dependent manner 3'-to-5' on single-stranded (ss)DNA, unwinding any encountered duplex nucleic acid. An RNA:DNA hybrid with a 3'-ssDNA loading strand is a 4.5-fold better helicase substrate than 3'-tailed double-stranded (ds)DNA; substrates where the helicase loads on a 3'-ssRNA tail (DNA:RNA and RNA:RNA) are not unwound. Unlike its M.smegmatis counterpart, the ATPase is not ssDNA-dependent. Forms a clamp around the ssDNA loading strand. Excises uracil residues from DNA; forked DNA with a dU residue is the best substrate followed by ssDNA. Inactive on dsDNA with a dU residue or DNA with an 8-oxoguanine residue. Uracil residues in DNA can arise as a result of misincorporation of dUMP residues by DNA polymerase or due to deamination of cytosine. This Escherichia coli (strain K12) protein is Lhr helicase/uracil glycosylase.